We begin with the raw amino-acid sequence, 126 residues long: MWWSVLAVSVGAVIGANLRWGLGLWLNASYHAVPWGTLVANLSGGWLIGVLMAFFSQSSVLSPEWRLFAVTGLCGALTTFSTFSLEMFAALQEGKWGMALVGILAHVVGSILMTALGFLTFSLVRG.

4 helical membrane-spanning segments follow: residues 5 to 25 (VLAVSVGAVIGANLRWGLGLW), 35 to 55 (WGTLVANLSGGWLIGVLMAFF), 68 to 88 (FAVTGLCGALTTFSTFSLEMF), and 99 to 119 (ALVGILAHVVGSILMTALGFL). Na(+) is bound by residues Gly75 and Thr78.

It belongs to the fluoride channel Fluc/FEX (TC 1.A.43) family.

The protein localises to the cell inner membrane. The enzyme catalyses fluoride(in) = fluoride(out). With respect to regulation, na(+) is not transported, but it plays an essential structural role and its presence is essential for fluoride channel function. Functionally, fluoride-specific ion channel. Important for reducing fluoride concentration in the cell, thus reducing its toxicity. This is Fluoride-specific ion channel FluC from Marinobacter nauticus (strain ATCC 700491 / DSM 11845 / VT8) (Marinobacter aquaeolei).